We begin with the raw amino-acid sequence, 60 residues long: DNA gyrase inhibitor YacG (60 aa).

4 residues coordinate Zn(2+): Cys3, Cys6, Cys18, and Cys22. Positions Pro38 to His60 are disordered. The span at Ser41–Ala52 shows a compositional bias: acidic residues.

The protein belongs to the DNA gyrase inhibitor YacG family. Interacts with GyrB. Zn(2+) serves as cofactor.

Inhibits all the catalytic activities of DNA gyrase by preventing its interaction with DNA. Acts by binding directly to the C-terminal domain of GyrB, which probably disrupts DNA binding by the gyrase. The protein is DNA gyrase inhibitor YacG of Ruegeria pomeroyi (strain ATCC 700808 / DSM 15171 / DSS-3) (Silicibacter pomeroyi).